The primary structure comprises 426 residues: Proline--tRNA ligase (426 aa).

The protein belongs to the class-II aminoacyl-tRNA synthetase family. ProS type 2 subfamily. In terms of assembly, homodimer.

The protein resides in the cytoplasm. It carries out the reaction tRNA(Pro) + L-proline + ATP = L-prolyl-tRNA(Pro) + AMP + diphosphate. In terms of biological role, catalyzes the attachment of proline to tRNA(Pro) in a two-step reaction: proline is first activated by ATP to form Pro-AMP and then transferred to the acceptor end of tRNA(Pro). The chain is Proline--tRNA ligase from Rickettsia peacockii (strain Rustic).